The sequence spans 362 residues: MAMQPWEYVYKLLMPEKAPTDWQKTFTKNIYLALAVPLTKEFEEKIEKGDIKDLKLPVYPVAFDVRFDRNAWVRETDILDILTRSGLYDNDYDFVTPINYNPRSLRYLDFDNSIPGYFPLADLELHFKRDITANPEDYGLKPIDGYKWELDRDGSYKVTSGSLFNVREAKNSGRYSVLFLDDNPRKFNMLNGFGIVRFYISLWEAPEEVRAKAKEECESAGGIYQYDYPVAYCVLPLNKKEANIKASDFILQLNEMVKSKITSEDFLKHVMVYQLPDDMVHQFPGSEQIPVKPVIGKTFQEMVKVAAKDLILGGEEKEPKQESQEQLFNPFTIDEMLTEEQQQQQEEENNATEEEGDTVKLG.

The segment covering 314 to 323 (GEEKEPKQES) has biased composition (basic and acidic residues). A disordered region spans residues 314–362 (GEEKEPKQESQEQLFNPFTIDEMLTEEQQQQQEEENNATEEEGDTVKLG). Residues 345–356 (QEEENNATEEEG) are compositionally biased toward acidic residues.

This is an uncharacterized protein from Acidianus two-tailed virus (ATV).